A 275-amino-acid polypeptide reads, in one-letter code: Myb/SANT-like DNA-binding domain-containing protein 3 (275 aa).

In terms of domain architecture, Myb-like spans 13–78; it reads FSELEKSILL…QLKKCWENIK (66 aa). Serine 96 and serine 98 each carry phosphoserine. Lysine 154 participates in a covalent cross-link: Glycyl lysine isopeptide (Lys-Gly) (interchain with G-Cter in SUMO2). Residues 211-247 adopt a coiled-coil conformation; it reads QLIQMNEVHVAKIQQIERECEMAEEEHRIKMEVLNKK. Serine 274 bears the Phosphoserine mark.

Belongs to the MSANTD3 family.

The chain is Myb/SANT-like DNA-binding domain-containing protein 3 (MSANTD3) from Bos taurus (Bovine).